A 517-amino-acid chain; its full sequence is DNA primase DnaG (517 aa).

A Toprim domain is found at 171–257 (DAIIILEGRA…CVEDLVQKEV (87 aa)). E177, D219, and D221 together coordinate Mg(2+).

This sequence belongs to the archaeal DnaG primase family. As to quaternary structure, forms a ternary complex with MCM helicase and DNA. Component of the archaeal exosome complex. The cofactor is Mg(2+).

The enzyme catalyses ssDNA + n NTP = ssDNA/pppN(pN)n-1 hybrid + (n-1) diphosphate.. Functionally, RNA polymerase that catalyzes the synthesis of short RNA molecules used as primers for DNA polymerase during DNA replication. Also part of the exosome, which is a complex involved in RNA degradation. Acts as a poly(A)-binding protein that enhances the interaction between heteromeric, adenine-rich transcripts and the exosome. This is DNA primase DnaG from Methanosarcina barkeri (strain Fusaro / DSM 804).